The sequence spans 390 residues: 3-ketoacyl-CoA thiolase (390 aa).

C95 serves as the catalytic Acyl-thioester intermediate. Active-site proton acceptor residues include H346 and C376.

The protein belongs to the thiolase-like superfamily. Thiolase family. As to quaternary structure, heterotetramer of two alpha chains (FadB) and two beta chains (FadA).

It localises to the cytoplasm. It carries out the reaction an acyl-CoA + acetyl-CoA = a 3-oxoacyl-CoA + CoA. The protein operates within lipid metabolism; fatty acid beta-oxidation. Functionally, catalyzes the final step of fatty acid oxidation in which acetyl-CoA is released and the CoA ester of a fatty acid two carbons shorter is formed. The protein is 3-ketoacyl-CoA thiolase of Acinetobacter baumannii (strain ATCC 17978 / DSM 105126 / CIP 53.77 / LMG 1025 / NCDC KC755 / 5377).